The chain runs to 260 residues: Repetitive secreted protein 1 (260 aa).

The signal sequence occupies residues 1–20; sequence MKLSFTIVATAALVASCTFA.

In terms of processing, rsp1 is processed by the subtilisin-like endoprotease kex2. Cleavage by kex2 generates 11 peptides.

It is found in the secreted. Functionally, repetitive secreted protein essential for pathogenic development. Hum3 and rsp1 together are pathogenicity proteins that share an essential function in early stages of the infection. In Mycosarcoma maydis (Corn smut fungus), this protein is Repetitive secreted protein 1.